The chain runs to 294 residues: Putative cuticle collagen 145 (294 aa).

A signal peptide spans 1–30; that stretch reads MEKILVTFSTGAASIAVLAVLFTVPSLYNT. Residues 100-112 are compositionally biased toward pro residues; it reads TCPPGPPGPPGQP. Disordered regions lie at residues 100 to 133 and 148 to 276; these read TCPP…ATFA and PQGP…LPGN. Triple-helical region stretches follow at residues 102–127 and 148–277; these read PPGP…KGDD and PQGP…PGND. 2 stretches are compositionally biased toward low complexity: residues 164–194 and 219–265; these read AGPD…NGQP and APGA…DGQP. The Collagen-like domain maps to 218–276; the sequence is GAPGAPGNAGPAGPAGQDGFPGQDGAPGPAGPAGQDGFPGNAGSDGQPGAPGGPGLPGN.

It belongs to the cuticular collagen family. As to quaternary structure, collagen polypeptide chains are complexed within the cuticle by disulfide bonds and other types of covalent cross-links.

Functionally, nematode cuticles are composed largely of collagen-like proteins. The cuticle functions both as an exoskeleton and as a barrier to protect the worm from its environment. The sequence is that of Putative cuticle collagen 145 (col-145) from Caenorhabditis elegans.